The chain runs to 167 residues: tRNA-specific adenosine deaminase (167 aa).

Residues 6 to 117 (FSHEYWMRHA…DAKTGAAGSL (112 aa)) form the CMP/dCMP-type deaminase domain. A Zn(2+)-binding site is contributed by His-57. Glu-59 functions as the Proton donor in the catalytic mechanism. Zn(2+)-binding residues include Cys-87 and Cys-90.

This sequence belongs to the cytidine and deoxycytidylate deaminase family. In terms of assembly, homodimer. The cofactor is Zn(2+).

It catalyses the reaction adenosine(34) in tRNA + H2O + H(+) = inosine(34) in tRNA + NH4(+). Its function is as follows. Catalyzes the deamination of adenosine to inosine at the wobble position 34 of tRNA(Arg2). Essential for cell viability. The polypeptide is tRNA-specific adenosine deaminase (Escherichia coli (strain K12)).